Here is a 499-residue protein sequence, read N- to C-terminus: ATP synthase subunit beta, chloroplastic (499 aa).

Position 170 to 177 (170 to 177) interacts with ATP; it reads GGAGVGKT.

This sequence belongs to the ATPase alpha/beta chains family. As to quaternary structure, F-type ATPases have 2 components, CF(1) - the catalytic core - and CF(0) - the membrane proton channel. CF(1) has five subunits: alpha(3), beta(3), gamma(1), delta(1), epsilon(1). CF(0) has four main subunits: a(1), b(1), b'(1) and c(9-12).

Its subcellular location is the plastid. It is found in the chloroplast thylakoid membrane. It carries out the reaction ATP + H2O + 4 H(+)(in) = ADP + phosphate + 5 H(+)(out). Functionally, produces ATP from ADP in the presence of a proton gradient across the membrane. The catalytic sites are hosted primarily by the beta subunits. This is ATP synthase subunit beta, chloroplastic from Ipomoea purpurea (Common morning glory).